We begin with the raw amino-acid sequence, 254 residues long: Galactitol 2-dehydrogenase (L-tagatose-forming) (254 aa).

Residues 21–23 (SGI), Asp42, 66–67 (DV), Tyr159, Lys163, and 192–194 (VAT) each bind NAD(+). Residue Tyr159 is the Proton acceptor of the active site. A Mg(2+)-binding site is contributed by Trp254.

It belongs to the short-chain dehydrogenases/reductases (SDR) family. As to quaternary structure, homotetramer. Requires a divalent metal cation as cofactor.

The enzyme catalyses galactitol + NAD(+) = keto-L-tagatose + NADH + H(+). Its activity is regulated as follows. Inhibited by the chelating agents EDTA and alpha,alpha'-dipyridyl. Inhibited by Zn(2+) and Fe(2+). In terms of biological role, catalyzes the interconversion of galactitol to the rare sugar L-tagatose. Shows activity with a wide range of substrates, and catalyzes the oxidation of a variety of polyvalent aliphatic alcohols and polyols to the corresponding ketones and ketoses, respectively, and in the reverse reaction, it reduces ketones with high stereoselectivity yielding the corresponding S-configurated alcohols. Shows high activity with D-threitol, xylitol, 1,2-hexanediol, 1,2-pentanediol, 2-hexanol, L-erythrulose, D-ribulose and acetoin. Specific for NAD(+). The protein is Galactitol 2-dehydrogenase (L-tagatose-forming) of Cereibacter sphaeroides (Rhodobacter sphaeroides).